The chain runs to 296 residues: tRNA uridine(34) hydroxylase (296 aa).

The region spanning 130–225 (RGEDVVFFDG…YGEAYGDRGL (96 aa)) is the Rhodanese domain. The active-site Cysteine persulfide intermediate is the cysteine 185.

This sequence belongs to the TrhO family.

It carries out the reaction uridine(34) in tRNA + AH2 + O2 = 5-hydroxyuridine(34) in tRNA + A + H2O. In terms of biological role, catalyzes oxygen-dependent 5-hydroxyuridine (ho5U) modification at position 34 in tRNAs. This is tRNA uridine(34) hydroxylase from Kocuria rhizophila (strain ATCC 9341 / DSM 348 / NBRC 103217 / DC2201).